Consider the following 285-residue polypeptide: 4-hydroxybenzoate octaprenyltransferase (285 aa).

Transmembrane regions (helical) follow at residues 33-53 (FLAADGIPDWHVLIVFILGVV), 93-113 (LILFSVLVTCSFILVLTMNTL), 134-154 (ITYLPQFVLGLAFSWAIPMAY), 166-186 (WLLFVINAVWTIAYDTQYAMV), 209-229 (LMIGLLQLTVLTLLIALGIQL), 233-253 (SLYNWGVLAAAGCFVYQQWLI), and 265-285 (FLNNNYVGGFIFVAISASVLI).

It belongs to the UbiA prenyltransferase family. The cofactor is Mg(2+).

The protein localises to the cell inner membrane. It catalyses the reaction all-trans-octaprenyl diphosphate + 4-hydroxybenzoate = 4-hydroxy-3-(all-trans-octaprenyl)benzoate + diphosphate. It functions in the pathway cofactor biosynthesis; ubiquinone biosynthesis. In terms of biological role, catalyzes the prenylation of para-hydroxybenzoate (PHB) with an all-trans polyprenyl group. Mediates the second step in the final reaction sequence of ubiquinone-8 (UQ-8) biosynthesis, which is the condensation of the polyisoprenoid side chain with PHB, generating the first membrane-bound Q intermediate 3-octaprenyl-4-hydroxybenzoate. The chain is 4-hydroxybenzoate octaprenyltransferase from Aliivibrio salmonicida (strain LFI1238) (Vibrio salmonicida (strain LFI1238)).